Consider the following 258-residue polypeptide: Imidazole glycerol phosphate synthase subunit HisF (258 aa).

Catalysis depends on residues D11 and D130.

This sequence belongs to the HisA/HisF family. In terms of assembly, heterodimer of HisH and HisF.

It is found in the cytoplasm. It catalyses the reaction 5-[(5-phospho-1-deoxy-D-ribulos-1-ylimino)methylamino]-1-(5-phospho-beta-D-ribosyl)imidazole-4-carboxamide + L-glutamine = D-erythro-1-(imidazol-4-yl)glycerol 3-phosphate + 5-amino-1-(5-phospho-beta-D-ribosyl)imidazole-4-carboxamide + L-glutamate + H(+). Its pathway is amino-acid biosynthesis; L-histidine biosynthesis; L-histidine from 5-phospho-alpha-D-ribose 1-diphosphate: step 5/9. Its function is as follows. IGPS catalyzes the conversion of PRFAR and glutamine to IGP, AICAR and glutamate. The HisF subunit catalyzes the cyclization activity that produces IGP and AICAR from PRFAR using the ammonia provided by the HisH subunit. The chain is Imidazole glycerol phosphate synthase subunit HisF from Escherichia coli O1:K1 / APEC.